Consider the following 88-residue polypeptide: Apolipoprotein C-I (88 aa).

The first 26 residues, 1-26 (MRLLLSLPVLLVALSVVLERPAPAQA), serve as a signal peptide directing secretion.

This sequence belongs to the apolipoprotein C1 family.

It is found in the secreted. Functionally, inhibitor of lipoprotein binding to the low density lipoprotein (LDL) receptor, LDL receptor-related protein, and very low density lipoprotein (VLDL) receptor. Associates with high density lipoproteins (HDL) and the triacylglycerol-rich lipoproteins in the plasma and makes up about 10% of the protein of the VLDL and 2% of that of HDL. Appears to interfere directly with fatty acid uptake and is also the major plasma inhibitor of cholesteryl ester transfer protein (CETP). Binds free fatty acids and reduces their intracellular esterification. Modulates the interaction of APOE with beta-migrating VLDL and inhibits binding of beta-VLDL to the LDL receptor-related protein. In Tupaia glis (Common tree shrew), this protein is Apolipoprotein C-I (APOC1).